The following is a 195-amino-acid chain: ATP-dependent Clp protease proteolytic subunit (195 aa).

The active-site Nucleophile is the Ser98. His123 is a catalytic residue.

It belongs to the peptidase S14 family. Fourteen ClpP subunits assemble into 2 heptameric rings which stack back to back to give a disk-like structure with a central cavity, resembling the structure of eukaryotic proteasomes.

Its subcellular location is the cytoplasm. It carries out the reaction Hydrolysis of proteins to small peptides in the presence of ATP and magnesium. alpha-casein is the usual test substrate. In the absence of ATP, only oligopeptides shorter than five residues are hydrolyzed (such as succinyl-Leu-Tyr-|-NHMec, and Leu-Tyr-Leu-|-Tyr-Trp, in which cleavage of the -Tyr-|-Leu- and -Tyr-|-Trp bonds also occurs).. Functionally, cleaves peptides in various proteins in a process that requires ATP hydrolysis. Has a chymotrypsin-like activity. Plays a major role in the degradation of misfolded proteins. The chain is ATP-dependent Clp protease proteolytic subunit from Staphylococcus haemolyticus (strain JCSC1435).